A 57-amino-acid chain; its full sequence is Sperm histone (57 aa).

Residues M1–Y57 form a disordered region. T9 bears the Phosphothreonine mark.

Belongs to the protamine P1 family. In terms of tissue distribution, testis.

Its subcellular location is the nucleus. It is found in the chromosome. Its function is as follows. Protamines substitute for histones in the chromatin of sperm during the haploid phase of spermatogenesis. They compact sperm DNA into a highly condensed, stable and inactive complex. This Coturnix japonica (Japanese quail) protein is Sperm histone.